The sequence spans 763 residues: Disintegrin and metalloproteinase domain-containing protein 29 (763 aa).

An N-terminal signal peptide occupies residues 1-31 (MNMIEALLSMRVLFLTQVFGIFLCFPGLTKA). Positions 32-200 (GHLHYHSSIE…ILKQSSFEDW (169 aa)) are excised as a propeptide. N-linked (GlcNAc...) asparagine glycans are attached at residues Asn-164, Asn-177, and Asn-223. Topologically, residues 201–684 (WTHTKIVELV…KTNKKKHFFY (484 aa)) are extracellular. A Peptidase M12B domain is found at 205–396 (KIVELVVVVD…NTRCLMENMY (192 aa)). Disulfide bonds link Cys-313–Cys-390, Cys-353–Cys-375, and Cys-355–Cys-360. 5 N-linked (GlcNAc...) asparagine glycosylation sites follow: Asn-374, Asn-424, Asn-434, Asn-475, and Asn-584. A Disintegrin domain is found at 403–489 (RTRCGNGVVE…ECPDDAYVED (87 aa)). Residues Cys-461 and Cys-481 are joined by a disulfide bond. 3 cysteine pairs are disulfide-bonded: Cys-631/Cys-642, Cys-636/Cys-648, and Cys-650/Cys-659. The EGF-like domain maps to 631–660 (CTPAFCNYRGICNNKHHCHCNFHWDPPNCM). The helical transmembrane segment at 685–705 (LLLLQLIILACLLSCLLWLLF) threads the bilayer. The Cytoplasmic portion of the chain corresponds to 706-763 (NIKGSKRKPQVQPTPVKTKKVSKKVPSQKPSPVPSPSLPQLRMPSRSASPTSSIKSTN). A disordered region spans residues 712–763 (RKPQVQPTPVKTKKVSKKVPSQKPSPVPSPSLPQLRMPSRSASPTSSIKSTN). Residues 751–763 (RSASPTSSIKSTN) show a composition bias toward polar residues.

The protein resides in the membrane. In terms of biological role, may be involved in spermatogenesis and fertilization. Seems to be a non catalytic metalloprotease-like protein. The chain is Disintegrin and metalloproteinase domain-containing protein 29 (Adam29) from Mus musculus (Mouse).